Reading from the N-terminus, the 64-residue chain is Large ribosomal subunit protein bL35 (64 aa).

A compositionally biased stretch (basic residues) spans 1–14; the sequence is MKQKTHKGTAKRVK. The segment at 1–50 is disordered; sequence MKQKTHKGTAKRVKITGSGKLRREQANRRHLLEGKPSKRTRRLKGTEDVA. Basic and acidic residues predominate over residues 21–36; sequence LRREQANRRHLLEGKP.

It belongs to the bacterial ribosomal protein bL35 family.

The sequence is that of Large ribosomal subunit protein bL35 from Corynebacterium diphtheriae (strain ATCC 700971 / NCTC 13129 / Biotype gravis).